Here is a 151-residue protein sequence, read N- to C-terminus: S-protein homolog 74 (151 aa).

An N-terminal signal peptide occupies residues 1 to 25 (MNYIKQFILAICFYLVLTCQDHVLA).

It belongs to the plant self-incompatibility (S1) protein family.

The protein localises to the secreted. In Arabidopsis thaliana (Mouse-ear cress), this protein is S-protein homolog 74.